We begin with the raw amino-acid sequence, 222 residues long: MIKLLLTDLDGTLTEDRGTYVVDIGAIKALRRAEKAGIRVALVSGNSYPVLRGLHNYLGLSGGLVAENGCFVFHGGVTFRVCETVPREVVSEFAKTFNLRESWQNEFRRSDFGFTPAELKDEMIKWAEERGLVVQSSGYALHLSGKPGGKGAGVRKLLELANVKREETGAIGDSRTDIEMFREAGITAAVSNADPELKRVASISLKLKSGAGVMEFIDMLLS.

The active-site Nucleophile is the aspartate 8. Residues aspartate 8 and aspartate 10 each coordinate Mg(2+). Lysine 150 provides a ligand contact to substrate. Mg(2+)-binding residues include aspartate 173 and aspartate 177.

This sequence belongs to the archaeal SPP-like hydrolase family. Mg(2+) is required as a cofactor.

The enzyme catalyses 2-phosphoglycolate + H2O = glycolate + phosphate. Catalyzes the dephosphorylation of 2-phosphoglycolate. This Metallosphaera sedula (strain ATCC 51363 / DSM 5348 / JCM 9185 / NBRC 15509 / TH2) protein is Phosphoglycolate phosphatase.